The primary structure comprises 336 residues: Phosphoribosylformylglycinamidine cyclo-ligase (336 aa).

The protein belongs to the AIR synthase family.

The protein localises to the cytoplasm. It carries out the reaction 2-formamido-N(1)-(5-O-phospho-beta-D-ribosyl)acetamidine + ATP = 5-amino-1-(5-phospho-beta-D-ribosyl)imidazole + ADP + phosphate + H(+). It participates in purine metabolism; IMP biosynthesis via de novo pathway; 5-amino-1-(5-phospho-D-ribosyl)imidazole from N(2)-formyl-N(1)-(5-phospho-D-ribosyl)glycinamide: step 2/2. The protein is Phosphoribosylformylglycinamidine cyclo-ligase of Thermoanaerobacter sp. (strain X514).